Reading from the N-terminus, the 81-residue chain is Photosystem I iron-sulfur center (81 aa).

4Fe-4S ferredoxin-type domains are found at residues 2–31 and 39–68; these read SHSV…MIPW and IASA…VRVY. [4Fe-4S] cluster contacts are provided by Cys11, Cys14, Cys17, Cys21, Cys48, Cys51, Cys54, and Cys58.

As to quaternary structure, the eukaryotic PSI reaction center is composed of at least 11 subunits. Requires [4Fe-4S] cluster as cofactor.

The protein localises to the plastid. Its subcellular location is the chloroplast thylakoid membrane. The enzyme catalyses reduced [plastocyanin] + hnu + oxidized [2Fe-2S]-[ferredoxin] = oxidized [plastocyanin] + reduced [2Fe-2S]-[ferredoxin]. Functionally, apoprotein for the two 4Fe-4S centers FA and FB of photosystem I (PSI); essential for photochemical activity. FB is the terminal electron acceptor of PSI, donating electrons to ferredoxin. The C-terminus interacts with PsaA/B/D and helps assemble the protein into the PSI complex. Required for binding of PsaD and PsaE to PSI. PSI is a plastocyanin-ferredoxin oxidoreductase, converting photonic excitation into a charge separation, which transfers an electron from the donor P700 chlorophyll pair to the spectroscopically characterized acceptors A0, A1, FX, FA and FB in turn. This chain is Photosystem I iron-sulfur center, found in Sorghum bicolor (Sorghum).